Reading from the N-terminus, the 290-residue chain is Probable 2-(5''-triphosphoribosyl)-3'-dephosphocoenzyme-A synthase (290 aa).

It belongs to the CitG/MdcB family.

It catalyses the reaction 3'-dephospho-CoA + ATP = 2'-(5''-triphospho-alpha-D-ribosyl)-3'-dephospho-CoA + adenine. Functionally, involved in the formation of 2-(5''-phosphoribosyl)-3'-dephosphocoenzyme-A, the prosthetic group of the acyl-carrier protein of the malonate decarboxylase. In Stutzerimonas stutzeri (strain A1501) (Pseudomonas stutzeri), this protein is Probable 2-(5''-triphosphoribosyl)-3'-dephosphocoenzyme-A synthase.